Reading from the N-terminus, the 424-residue chain is CinA-like protein (424 aa).

Belongs to the CinA family.

This Shewanella pealeana (strain ATCC 700345 / ANG-SQ1) protein is CinA-like protein.